Consider the following 484-residue polypeptide: Aspartyl/glutamyl-tRNA(Asn/Gln) amidotransferase subunit B (484 aa).

Belongs to the GatB/GatE family. GatB subfamily. In terms of assembly, heterotrimer of A, B and C subunits.

The enzyme catalyses L-glutamyl-tRNA(Gln) + L-glutamine + ATP + H2O = L-glutaminyl-tRNA(Gln) + L-glutamate + ADP + phosphate + H(+). It catalyses the reaction L-aspartyl-tRNA(Asn) + L-glutamine + ATP + H2O = L-asparaginyl-tRNA(Asn) + L-glutamate + ADP + phosphate + 2 H(+). Its function is as follows. Allows the formation of correctly charged Asn-tRNA(Asn) or Gln-tRNA(Gln) through the transamidation of misacylated Asp-tRNA(Asn) or Glu-tRNA(Gln) in organisms which lack either or both of asparaginyl-tRNA or glutaminyl-tRNA synthetases. The reaction takes place in the presence of glutamine and ATP through an activated phospho-Asp-tRNA(Asn) or phospho-Glu-tRNA(Gln). The sequence is that of Aspartyl/glutamyl-tRNA(Asn/Gln) amidotransferase subunit B from Cupriavidus metallidurans (strain ATCC 43123 / DSM 2839 / NBRC 102507 / CH34) (Ralstonia metallidurans).